Reading from the N-terminus, the 509-residue chain is ATP synthase subunit alpha (509 aa).

169–176 (GDRQTGKT) lines the ATP pocket.

It belongs to the ATPase alpha/beta chains family. In terms of assembly, F-type ATPases have 2 components, CF(1) - the catalytic core - and CF(0) - the membrane proton channel. CF(1) has five subunits: alpha(3), beta(3), gamma(1), delta(1), epsilon(1). CF(0) has three main subunits: a(1), b(2) and c(9-12). The alpha and beta chains form an alternating ring which encloses part of the gamma chain. CF(1) is attached to CF(0) by a central stalk formed by the gamma and epsilon chains, while a peripheral stalk is formed by the delta and b chains.

It localises to the cell inner membrane. It catalyses the reaction ATP + H2O + 4 H(+)(in) = ADP + phosphate + 5 H(+)(out). Its function is as follows. Produces ATP from ADP in the presence of a proton gradient across the membrane. The alpha chain is a regulatory subunit. This chain is ATP synthase subunit alpha, found in Bradyrhizobium diazoefficiens (strain JCM 10833 / BCRC 13528 / IAM 13628 / NBRC 14792 / USDA 110).